The chain runs to 310 residues: CCR4-NOT transcription complex subunit 7 (310 aa).

A divalent metal cation-binding residues include aspartate 51, glutamate 53, aspartate 172, and aspartate 245.

The protein belongs to the CAF1 family. As to quaternary structure, component of the CCR4-NOT complex at least composed of ccf-1, ccr-4 and let-711, which is required for germ cell development in hermaphrodites. Within the complex interacts with let-711. Highly expressed in the germline. In particular, highly expressed in germ cells that enter meiosis and progress through the pachytene stage.

It is found in the nucleus. It localises to the cytoplasm. The catalysed reaction is Exonucleolytic cleavage of poly(A) to 5'-AMP.. Catalytic component of the CCR4-NOT complex which is one of the major cellular mRNA deadenylases and is linked to various cellular processes including bulk mRNA degradation, miRNA-mediated repression, translational repression during translational initiation and general transcription regulation. Within the complex, plays a role in miRNA-mediated deadenylation in embryos. Within the complex promotes germ cell development and fertility in hermaphrodites. Additional complex functions may be a consequence of its influence on mRNA expression. This chain is CCR4-NOT transcription complex subunit 7, found in Caenorhabditis elegans.